The following is a 145-amino-acid chain: 6-pyruvoyl tetrahydrobiopterin synthase (145 aa).

Ser-19 is modified (phosphoserine). His-24 contributes to the Zn(2+) binding site. At Ser-28 the chain carries Phosphoserine. The active-site Proton acceptor is the Cys-43. 2 residues coordinate Zn(2+): His-49 and His-51. His-90 functions as the Charge relay system in the catalytic mechanism. At Tyr-128 the chain carries Phosphotyrosine. Glu-134 serves as the catalytic Charge relay system.

The protein belongs to the PTPS family. Homohexamer formed of two homotrimers in a head to head fashion. It depends on Zn(2+) as a cofactor. Phosphorylation of Ser-19 is required for maximal enzyme activity.

It catalyses the reaction 7,8-dihydroneopterin 3'-triphosphate = 6-pyruvoyl-5,6,7,8-tetrahydropterin + triphosphate + H(+). It functions in the pathway cofactor biosynthesis; tetrahydrobiopterin biosynthesis; tetrahydrobiopterin from 7,8-dihydroneopterin triphosphate: step 1/3. Functionally, involved in the biosynthesis of tetrahydrobiopterin, an essential cofactor of aromatic amino acid hydroxylases. Catalyzes the transformation of 7,8-dihydroneopterin triphosphate into 6-pyruvoyl tetrahydropterin. In Pongo abelii (Sumatran orangutan), this protein is 6-pyruvoyl tetrahydrobiopterin synthase (PTS).